A 474-amino-acid polypeptide reads, in one-letter code: Proline--tRNA ligase (474 aa).

It belongs to the class-II aminoacyl-tRNA synthetase family. ProS type 3 subfamily. Homodimer.

It is found in the cytoplasm. It catalyses the reaction tRNA(Pro) + L-proline + ATP = L-prolyl-tRNA(Pro) + AMP + diphosphate. Its function is as follows. Catalyzes the attachment of proline to tRNA(Pro) in a two-step reaction: proline is first activated by ATP to form Pro-AMP and then transferred to the acceptor end of tRNA(Pro). In Onion yellows phytoplasma (strain OY-M), this protein is Proline--tRNA ligase.